The following is a 449-amino-acid chain: UDP-N-acetylmuramoylalanine--D-glutamate ligase (449 aa).

Residue 118-124 (GTNGKTT) participates in ATP binding.

The protein belongs to the MurCDEF family.

The protein resides in the cytoplasm. The catalysed reaction is UDP-N-acetyl-alpha-D-muramoyl-L-alanine + D-glutamate + ATP = UDP-N-acetyl-alpha-D-muramoyl-L-alanyl-D-glutamate + ADP + phosphate + H(+). It functions in the pathway cell wall biogenesis; peptidoglycan biosynthesis. Cell wall formation. Catalyzes the addition of glutamate to the nucleotide precursor UDP-N-acetylmuramoyl-L-alanine (UMA). The polypeptide is UDP-N-acetylmuramoylalanine--D-glutamate ligase (Staphylococcus epidermidis (strain ATCC 35984 / DSM 28319 / BCRC 17069 / CCUG 31568 / BM 3577 / RP62A)).